A 235-amino-acid chain; its full sequence is 7-cyano-7-deazaguanine synthase (235 aa).

Residue 16 to 26 (FSGGQDSTTCL) coordinates ATP. Residues Cys195, Cys204, Cys207, and Cys210 each coordinate Zn(2+).

The protein belongs to the QueC family. Requires Zn(2+) as cofactor.

The catalysed reaction is 7-carboxy-7-deazaguanine + NH4(+) + ATP = 7-cyano-7-deazaguanine + ADP + phosphate + H2O + H(+). The protein operates within purine metabolism; 7-cyano-7-deazaguanine biosynthesis. In terms of biological role, catalyzes the ATP-dependent conversion of 7-carboxy-7-deazaguanine (CDG) to 7-cyano-7-deazaguanine (preQ(0)). This chain is 7-cyano-7-deazaguanine synthase, found in Shewanella frigidimarina (strain NCIMB 400).